The chain runs to 885 residues: Envelope glycoprotein B (885 aa).

The signal sequence occupies residues 1–34 (MRPRGTPPSFLPLPVLLALAVIAAAGRAAPAAAA). Low complexity predominate over residues 29–46 (APAAAAAPTADPAATPAL). The tract at residues 29-74 (APAAAAAPTADPAATPALPEDEEVPDEDGEGVATPAPAANASVEAG) is disordered. Topologically, residues 35 to 759 (APTADPAATP…SGVSSFLSNP (725 aa)) are virion surface. Positions 47–58 (PEDEEVPDEDGE) are enriched in acidic residues. N-linked (GlcNAc...) asparagine; by host glycosylation is found at N68 and N122. 5 disulfides stabilise this stretch: C97/C558, C114/C514, C188/C252, C345/C393, and C581/C618. Involved in fusion and/or binding to host membrane stretches follow at residues 154 to 160 (VWFGHRY) and 239 to 246 (RVEAFHRY). N-linked (GlcNAc...) asparagine; by host glycans are attached at residues N379 and N411. The segment at 455–478 (RRPAGGDPGEAATPGPSVDPPSVE) is disordered. N-linked (GlcNAc...) asparagine; by host glycosylation is present at N659. Hydrophobic membrane proximal region stretches follow at residues 704-757 (IDTV…SFLS) and 716-756 (LFAG…SSFL). A helical transmembrane segment spans residues 760–780 (FGALAVGLLVLAGLAAAFFAF). The Intravirion portion of the chain corresponds to 781-885 (RYVMRLQRNP…PLRDTDEEEL (105 aa)). A Golgi targeting motif is present at residues 834–837 (YMAL). The disordered stretch occupies residues 866–885 (MRKRARPRYSPLRDTDEEEL). The Internalization motif signature appears at 874 to 877 (YSPL).

It belongs to the herpesviridae glycoprotein B family. As to quaternary structure, homotrimer; disulfide-linked. Binds to heparan sulfate proteoglycans. Interacts with gH/gL heterodimer.

It is found in the virion membrane. Its subcellular location is the host cell membrane. It localises to the host endosome membrane. The protein resides in the host Golgi apparatus membrane. Its function is as follows. Envelope glycoprotein that forms spikes at the surface of virion envelope. Essential for the initial attachment to heparan sulfate moieties of the host cell surface proteoglycans. Involved in fusion of viral and cellular membranes leading to virus entry into the host cell. Following initial binding to its host receptors, membrane fusion is mediated by the fusion machinery composed at least of gB and the heterodimer gH/gL. May be involved in the fusion between the virion envelope and the outer nuclear membrane during virion egress. This is Envelope glycoprotein B from Herpes simplex virus type 2 (strain SA8) (Simian agent 8).